We begin with the raw amino-acid sequence, 248 residues long: ATP synthase subunit a, chloroplastic (248 aa).

The next 5 helical transmembrane spans lie at 38 to 58 (QVLITSWVVIAVLLGSATIAV), 96 to 116 (VPFIGTMFLFILVSNWSGALL), 135 to 155 (INTTVALALLTSVAYFYAGLA), 200 to 220 (LVVAVLVSLVPLVVPIPVMFL), and 221 to 241 (GLFTSAIQALIFATLAAAYIG).

This sequence belongs to the ATPase A chain family. As to quaternary structure, F-type ATPases have 2 components, CF(1) - the catalytic core - and CF(0) - the membrane proton channel. CF(1) has five subunits: alpha(3), beta(3), gamma(1), delta(1), epsilon(1). CF(0) has four main subunits: a, b, b' and c.

Its subcellular location is the plastid. It is found in the chloroplast thylakoid membrane. Functionally, key component of the proton channel; it plays a direct role in the translocation of protons across the membrane. The sequence is that of ATP synthase subunit a, chloroplastic from Cycas taitungensis (Prince sago).